Reading from the N-terminus, the 520-residue chain is Maturase K (520 aa).

Belongs to the intron maturase 2 family. MatK subfamily.

The protein resides in the plastid. It is found in the chloroplast. In terms of biological role, usually encoded in the trnK tRNA gene intron. Probably assists in splicing its own and other chloroplast group II introns. The protein is Maturase K of Liriope muscari (Big blue lilyturf).